The following is a 519-amino-acid chain: Histidine ammonia-lyase (519 aa).

The segment at residues 146-148 (ASG) is a cross-link (5-imidazolinone (Ala-Gly)). Serine 147 is modified (2,3-didehydroalanine (Ser)).

It belongs to the PAL/histidase family. In terms of processing, contains an active site 4-methylidene-imidazol-5-one (MIO), which is formed autocatalytically by cyclization and dehydration of residues Ala-Ser-Gly.

It is found in the cytoplasm. It catalyses the reaction L-histidine = trans-urocanate + NH4(+). It functions in the pathway amino-acid degradation; L-histidine degradation into L-glutamate; N-formimidoyl-L-glutamate from L-histidine: step 1/3. This is Histidine ammonia-lyase from Psychrobacter sp. (strain PRwf-1).